Reading from the N-terminus, the 606-residue chain is DNA mismatch repair protein MutL (606 aa).

The tract at residues 340-366 is disordered; that stretch reads MNAFRPGYSPSGLRPSPSATWSAATSP. A compositionally biased stretch (low complexity) spans 353-366; sequence RPSPSATWSAATSP.

The protein belongs to the DNA mismatch repair MutL/HexB family.

Functionally, this protein is involved in the repair of mismatches in DNA. It is required for dam-dependent methyl-directed DNA mismatch repair. May act as a 'molecular matchmaker', a protein that promotes the formation of a stable complex between two or more DNA-binding proteins in an ATP-dependent manner without itself being part of a final effector complex. In Agrobacterium fabrum (strain C58 / ATCC 33970) (Agrobacterium tumefaciens (strain C58)), this protein is DNA mismatch repair protein MutL.